The chain runs to 81 residues: Cytotoxin 2 (81 aa).

Residues 1–21 (MKTLLLTLVVVTIVCLDLGYT) form the signal peptide. Intrachain disulfides connect cysteine 24/cysteine 42, cysteine 35/cysteine 59, cysteine 63/cysteine 74, and cysteine 75/cysteine 80.

This sequence belongs to the three-finger toxin family. Short-chain subfamily. Type IA cytotoxin sub-subfamily. As to quaternary structure, monomer in solution; Homodimer and oligomer in the presence of negatively charged lipids forming a pore with a size ranging between 20 and 30 Angstroms. As to expression, expressed by the venom gland.

It localises to the secreted. Its subcellular location is the target cell membrane. Shows cytolytic activity on many different cells by forming pore in lipid membranes. In vivo, increases heart rate or kills the animal by cardiac arrest. In addition, it binds to heparin with high affinity, interacts with Kv channel-interacting protein 1 (KCNIP1) in a calcium-independent manner, and binds to integrin alpha-V/beta-3 (ITGAV/ITGB3) with moderate affinity. This Naja kaouthia (Monocled cobra) protein is Cytotoxin 2.